A 223-amino-acid chain; its full sequence is Cutinase 4 (223 aa).

An N-terminal signal peptide occupies residues 1 to 26; it reads MPLPLLPPLLLPLEALLDLALHLVDS. A disulfide bridge links Cys60 with Cys133. Ser144 (nucleophile) is an active-site residue. A disulfide bridge links Cys187 with Cys194. The active site involves Asp191. The active-site Proton donor/acceptor is the His203.

The protein belongs to the cutinase family. In terms of processing, the 2 disulfide bonds play a critical role in holding the catalytic residues in juxta-position; reduction of the disulfide bridges results in the complete inactivation of the enzyme.

Its subcellular location is the secreted. The enzyme catalyses cutin + H2O = cutin monomers.. Its function is as follows. Catalyzes the hydrolysis of complex carboxylic polyesters found in the cell wall of plants. Degrades cutin, a macromolecule that forms the structure of the plant cuticle. Also degrades suberin, a specialized macromolecule found in the cell wall of various plant tissues. This chain is Cutinase 4, found in Emericella nidulans (strain FGSC A4 / ATCC 38163 / CBS 112.46 / NRRL 194 / M139) (Aspergillus nidulans).